The sequence spans 105 residues: UPF0251 protein AF_0666 (105 aa).

It belongs to the UPF0251 family.

This chain is UPF0251 protein AF_0666, found in Archaeoglobus fulgidus (strain ATCC 49558 / DSM 4304 / JCM 9628 / NBRC 100126 / VC-16).